A 323-amino-acid polypeptide reads, in one-letter code: MEDGSVSYGFKNIFITMFATFFFFKLLIKVFLALLTHFYIVKGNRKEAARIAEEIFGEISDCWADRSPLHEAAAQGRLLALKTLIAQGVNVNLVTINRVSSLHEACLGGHVACAKALLENGAHVNGVTVHGATPLFNACCSGSAACVNVLLEFGAKAQLEVHLASPIHEAVKRGNRECMEILLANNVNIDQEVPHLGTPLYAACTYQRLDCVKKLLELGANVNHGQWLDTPLHAAAKQNSVEIIHLLIDYGANLKCKNAQGQSALDLAAPKSSVEQALLLREGPPALSQLCRLCVRKCLGRNCHKTIHKLYLPDPLEKFLLYQ.

ANK repeat units follow at residues 64-93 (ADRS…NVNL), 97-126 (NRVS…HVNG), 130-159 (HGAT…KAQL), 162-191 (HLAS…NIDQ), 195-224 (HLGT…NVNH), and 227-256 (WLDT…NLKC). Positions 273-323 (SVEQALLLREGPPALSQLCRLCVRKCLGRNCHKTIHKLYLPDPLEKFLLYQ) constitute an SOCS box domain.

Belongs to the ankyrin SOCS box (ASB) family. As to quaternary structure, substrate-recognition component of the ECS(ASB11) complex, composed of ASB11, CUL5, ELOB, ELOC and RNF7/RBX2.

The protein localises to the endoplasmic reticulum. It functions in the pathway protein modification; protein ubiquitination. In terms of biological role, substrate-recognition component of a cullin-5-RING E3 ubiquitin-protein ligase complex (ECS complex, also named CRL5 complex), which mediates the ubiquitination and subsequent proteasomal degradation of target proteins, such as BIK, DIRAS2 and RPN1. The ECS(ASB11) complex acts as a regulator of the endoplasmic reticulum unfolded protein response by mediating ubiquitination and degradation of BIK. The chain is Ankyrin repeat and SOCS box protein 11 (ASB11) from Bos taurus (Bovine).